Reading from the N-terminus, the 286-residue chain is 4-hydroxybenzoate octaprenyltransferase (286 aa).

The next 8 membrane-spanning stretches (helical) occupy residues 20 to 40 (IGTF…AGGM), 43 to 63 (LKVL…GCII), 95 to 115 (ILFV…NPLV), 116 to 136 (VQLS…KRFT), 142 to 162 (FLGV…LGTV), 167 to 187 (WWLF…YAMV), 210 to 230 (QIIG…GLSA), and 235 to 255 (VFAL…KLIF).

Belongs to the UbiA prenyltransferase family. Mg(2+) serves as cofactor.

Its subcellular location is the cell inner membrane. The enzyme catalyses all-trans-octaprenyl diphosphate + 4-hydroxybenzoate = 4-hydroxy-3-(all-trans-octaprenyl)benzoate + diphosphate. It functions in the pathway cofactor biosynthesis; ubiquinone biosynthesis. In terms of biological role, catalyzes the prenylation of para-hydroxybenzoate (PHB) with an all-trans polyprenyl group. Mediates the second step in the final reaction sequence of ubiquinone-8 (UQ-8) biosynthesis, which is the condensation of the polyisoprenoid side chain with PHB, generating the first membrane-bound Q intermediate 3-octaprenyl-4-hydroxybenzoate. The chain is 4-hydroxybenzoate octaprenyltransferase from Shewanella loihica (strain ATCC BAA-1088 / PV-4).